The following is a 356-amino-acid chain: Phosphoribosylformylglycinamidine cyclo-ligase (356 aa).

It belongs to the AIR synthase family.

It localises to the cytoplasm. The catalysed reaction is 2-formamido-N(1)-(5-O-phospho-beta-D-ribosyl)acetamidine + ATP = 5-amino-1-(5-phospho-beta-D-ribosyl)imidazole + ADP + phosphate + H(+). The protein operates within purine metabolism; IMP biosynthesis via de novo pathway; 5-amino-1-(5-phospho-D-ribosyl)imidazole from N(2)-formyl-N(1)-(5-phospho-D-ribosyl)glycinamide: step 2/2. In Nitrobacter hamburgensis (strain DSM 10229 / NCIMB 13809 / X14), this protein is Phosphoribosylformylglycinamidine cyclo-ligase.